Consider the following 342-residue polypeptide: Galactose mutarotase (342 aa).

Ala-2 carries the post-translational modification N-acetylalanine. Ser-14 carries the post-translational modification Phosphoserine. Beta-D-galactose is bound by residues 81–82 (NR) and His-107. Phosphoserine is present on Ser-124. Residue His-176 is the Proton donor of the active site. Residues 176–178 (HSY), Asp-243, Gln-279, and Glu-307 each bind beta-D-galactose. Glu-307 acts as the Proton acceptor in catalysis.

It belongs to the aldose epimerase family. Monomer.

It localises to the cytoplasm. It carries out the reaction alpha-D-galactose = beta-D-galactose. It catalyses the reaction alpha-D-glucose = beta-D-glucose. The protein operates within carbohydrate metabolism; hexose metabolism. It participates in carbohydrate metabolism; galactose metabolism. Functionally, mutarotase that catalyzes the interconversion of beta-D-galactose and alpha-D-galactose during galactose metabolism. Beta-D-galactose is metabolized in the liver into glucose 1-phosphate, the primary metabolic fuel, by the action of four enzymes that constitute the Leloir pathway: GALM, GALK1 (galactokinase), GALT (galactose-1-phosphate uridylyltransferase) and GALE (UDP-galactose-4'-epimerase). Involved in the maintenance of the equilibrium between the beta- and alpha-anomers of galactose, therefore ensuring a sufficient supply of the alpha-anomer for GALK1. Also active on D-glucose although shows a preference for galactose over glucose. This Homo sapiens (Human) protein is Galactose mutarotase.